The following is a 179-amino-acid chain: Peptidyl-tRNA hydrolase (179 aa).

Tyr14 is a binding site for tRNA. The Proton acceptor role is filled by His19. TRNA-binding residues include Tyr61, Asn63, and Asn107.

It belongs to the PTH family. As to quaternary structure, monomer.

It is found in the cytoplasm. It carries out the reaction an N-acyl-L-alpha-aminoacyl-tRNA + H2O = an N-acyl-L-amino acid + a tRNA + H(+). Its function is as follows. Hydrolyzes ribosome-free peptidyl-tRNAs (with 1 or more amino acids incorporated), which drop off the ribosome during protein synthesis, or as a result of ribosome stalling. Catalyzes the release of premature peptidyl moieties from peptidyl-tRNA molecules trapped in stalled 50S ribosomal subunits, and thus maintains levels of free tRNAs and 50S ribosomes. The polypeptide is Peptidyl-tRNA hydrolase (Campylobacter lari (strain RM2100 / D67 / ATCC BAA-1060)).